A 497-amino-acid polypeptide reads, in one-letter code: Cytochrome P450 71A18 (497 aa).

A helical membrane pass occupies residues 4 to 24; that stretch reads TLMVSLCLTTLLTLLLLKKFL. C439 provides a ligand contact to heme.

The protein belongs to the cytochrome P450 family. Requires heme as cofactor.

The protein resides in the membrane. The polypeptide is Cytochrome P450 71A18 (CYP71A18) (Arabidopsis thaliana (Mouse-ear cress)).